The following is a 429-amino-acid chain: UDP-N-acetylglucosamine 1-carboxyvinyltransferase 2 (429 aa).

Residue 22–23 (KN) coordinates phosphoenolpyruvate. Arginine 92 contacts UDP-N-acetyl-alpha-D-glucosamine. Catalysis depends on cysteine 116, which acts as the Proton donor. Cysteine 116 bears the 2-(S-cysteinyl)pyruvic acid O-phosphothioketal mark. Residues 121–125 (RPIDQ), aspartate 305, and isoleucine 327 each bind UDP-N-acetyl-alpha-D-glucosamine.

Belongs to the EPSP synthase family. MurA subfamily.

The protein resides in the cytoplasm. It carries out the reaction phosphoenolpyruvate + UDP-N-acetyl-alpha-D-glucosamine = UDP-N-acetyl-3-O-(1-carboxyvinyl)-alpha-D-glucosamine + phosphate. Its pathway is cell wall biogenesis; peptidoglycan biosynthesis. Functionally, cell wall formation. Adds enolpyruvyl to UDP-N-acetylglucosamine. This chain is UDP-N-acetylglucosamine 1-carboxyvinyltransferase 2, found in Bacillus subtilis (strain 168).